The following is a 361-amino-acid chain: Epoxyqueuosine reductase (361 aa).

The active-site Proton donor is Asp147. The 4Fe-4S ferredoxin-type domain maps to 193–222; it reads VDPAMDSEHCGRCSACLDICPTAAFVGPYR. Residues Cys202, Cys205, Cys208, Cys212, Cys228, Cys255, Cys258, and Cys262 each coordinate [4Fe-4S] cluster.

This sequence belongs to the QueG family. Monomer. Cob(II)alamin is required as a cofactor. The cofactor is [4Fe-4S] cluster.

The protein localises to the cytoplasm. It catalyses the reaction epoxyqueuosine(34) in tRNA + AH2 = queuosine(34) in tRNA + A + H2O. Its pathway is tRNA modification; tRNA-queuosine biosynthesis. In terms of biological role, catalyzes the conversion of epoxyqueuosine (oQ) to queuosine (Q), which is a hypermodified base found in the wobble positions of tRNA(Asp), tRNA(Asn), tRNA(His) and tRNA(Tyr). This Pseudomonas aeruginosa (strain ATCC 15692 / DSM 22644 / CIP 104116 / JCM 14847 / LMG 12228 / 1C / PRS 101 / PAO1) protein is Epoxyqueuosine reductase.